We begin with the raw amino-acid sequence, 360 residues long: G-protein coupled receptor 15 (360 aa).

Topologically, residues 1–33 (MDPEETSVYLDYYYATSPNPDIRETHSHVPYTS) are extracellular. A helical membrane pass occupies residues 34–54 (VFLPVFYIAVFLTGVLGNLVL). At 55–69 (MGALHFKPGSRRLID) the chain is on the cytoplasmic side. The chain crosses the membrane as a helical span at residues 70-90 (IFIINLAASDFIFLVTLPLWV). The Extracellular segment spans residues 91 to 120 (DKEASLGLWRTGSFLCKGSSYMISVNMHCS). A helical membrane pass occupies residues 121-141 (VFLLTCMSVDRYLAIVCPVVS). Residues 142-149 (RKFRRTDC) are Cytoplasmic-facing. The chain crosses the membrane as a helical span at residues 150-170 (AYVVCASIWFISCLLGLPTLL). The Extracellular segment spans residues 171 to 192 (SRELTLIDDKPYCAEKKATPLK). A helical membrane pass occupies residues 193–213 (LIWSLVALIFTFFVPLLSIVT). Topologically, residues 214 to 239 (CYCRIARKLCAHYQQSGKHNKKLKKS) are cytoplasmic. The chain crosses the membrane as a helical span at residues 240 to 260 (IKIIFIVVAAFLVSWLPFNTS). Residues 261-284 (KLLAIVSGLQQERYFPSAILQLGM) are Extracellular-facing. Residues 285–305 (EVSGPLAFANSCVNPFIYYIF) form a helical membrane-spanning segment. The Cytoplasmic segment spans residues 306–360 (DSYIRRAIVHCLCPCLKNYDFGSSTETSDSHLTKALSTFIHAEDFTRRRKRSVSL). Ser-359 bears the Phosphoserine mark.

It belongs to the G-protein coupled receptor 1 family. Interacts with adapter YWHAE; this interaction promotes ER-to-Golgi transport of GPR15. Post-translationally, phosphorylation is necessary for YWHAE binding and efficient surface expression. In terms of processing, O-glycosylated. Sialylated O-glycans in the N-terminal tail inhibits binding of GPR15LG. Sulfation is required for efficient binding of GPR15LG.

Its subcellular location is the cell membrane. G protein-coupled receptor that plays an important role in immune homeostasis. Acts via its natural ligand GPR15LG, a chemokine-like polypeptide strongly expressed in gastrointestinal tissues. GPR15-GPR15LG signaling axis regulates intestinal homeostasis and inflammation through the migration of immune cells. Controls thereby the specific homing of T-cells, particularly FOXP3+ regulatory T-cells (Tregs), to the large intestine lamina propria. Also required for skin localization of thymus-derived dendritic epidermal T-cells. Plays an important role in mediating cytoprotective function as well as angiogenesis of thrombomodulin. Mechanistically, preferentially signals through the Gi/o pathway to inhibit adenylate cyclase activity and activate a phosphatidylinositol-calcium second messenger system that regulates the release of Ca(2+) ions from intracellular stores. The protein is G-protein coupled receptor 15 (GPR15) of Chlorocebus aethiops (Green monkey).